A 295-amino-acid polypeptide reads, in one-letter code: Pyridoxal 5'-phosphate synthase subunit PdxS (295 aa).

Asp-25 provides a ligand contact to D-ribose 5-phosphate. The active-site Schiff-base intermediate with D-ribose 5-phosphate is Lys-82. Gly-154 is a D-ribose 5-phosphate binding site. Position 166 (Arg-166) interacts with D-glyceraldehyde 3-phosphate. Residues Gly-215 and 236–237 (GS) contribute to the D-ribose 5-phosphate site.

Belongs to the PdxS/SNZ family. As to quaternary structure, in the presence of PdxT, forms a dodecamer of heterodimers.

The catalysed reaction is aldehydo-D-ribose 5-phosphate + D-glyceraldehyde 3-phosphate + L-glutamine = pyridoxal 5'-phosphate + L-glutamate + phosphate + 3 H2O + H(+). Its pathway is cofactor biosynthesis; pyridoxal 5'-phosphate biosynthesis. Catalyzes the formation of pyridoxal 5'-phosphate from ribose 5-phosphate (RBP), glyceraldehyde 3-phosphate (G3P) and ammonia. The ammonia is provided by the PdxT subunit. Can also use ribulose 5-phosphate and dihydroxyacetone phosphate as substrates, resulting from enzyme-catalyzed isomerization of RBP and G3P, respectively. The sequence is that of Pyridoxal 5'-phosphate synthase subunit PdxS from Listeria innocua serovar 6a (strain ATCC BAA-680 / CLIP 11262).